Consider the following 322-residue polypeptide: Cysteine protease YopT (322 aa).

Positions 43 to 72 (SHSNRQKKLSATIKHNQSSRSMLDRKLTSD) are disordered. Active-site residues include C139, H258, and D274.

It belongs to the peptidase C58 family. In terms of assembly, interacts with human ARHA.

The protein resides in the secreted. Functionally, cysteine protease, which is translocated into infected cells and plays a central role in pathogenesis by cleaving the C-terminus end of the human small GTPase RhoA/ARHA, a regulator of cytoskeleton. Once cleaved, ARHA loses its lipid modification, and is released from the cell membrane, leading to the subsequent disruption of actin cytoskeleton of the host cell. The polypeptide is Cysteine protease YopT (yopT) (Yersinia enterocolitica).